A 139-amino-acid chain; its full sequence is Small ribosomal subunit protein uS12 (139 aa).

At Asp102 the chain carries 3-methylthioaspartic acid.

Belongs to the universal ribosomal protein uS12 family. In terms of assembly, part of the 30S ribosomal subunit. Contacts proteins S8 and S17. May interact with IF1 in the 30S initiation complex.

With S4 and S5 plays an important role in translational accuracy. Functionally, interacts with and stabilizes bases of the 16S rRNA that are involved in tRNA selection in the A site and with the mRNA backbone. Located at the interface of the 30S and 50S subunits, it traverses the body of the 30S subunit contacting proteins on the other side and probably holding the rRNA structure together. The combined cluster of proteins S8, S12 and S17 appears to hold together the shoulder and platform of the 30S subunit. This chain is Small ribosomal subunit protein uS12, found in Mycoplasma capricolum subsp. capricolum (strain California kid / ATCC 27343 / NCTC 10154).